Here is a 149-residue protein sequence, read N- to C-terminus: MHCPFCSTEETKVIDSRLVSDGYQVRRRRECTKCHERFTTFETAELVVPKIIKNNGMREPFNEDKLRRGIQHALEKRPVSADDVEKAISHITHQLRATGEREVPSKLVGSLVMEELKKLDKVAYIRFASVYLSFENINEFSNEIEKLKD.

Residues 3–34 (CPFCSTEETKVIDSRLVSDGYQVRRRRECTKC) fold into a zinc finger. The ATP-cone domain occupies 49-139 (PKIIKNNGMR…VYLSFENINE (91 aa)).

This sequence belongs to the NrdR family. The cofactor is Zn(2+).

In terms of biological role, negatively regulates transcription of bacterial ribonucleotide reductase nrd genes and operons by binding to NrdR-boxes. The polypeptide is Transcriptional repressor NrdR (Mannheimia succiniciproducens (strain KCTC 0769BP / MBEL55E)).